The sequence spans 101 residues: MAKQSMIEREKKRAKMVAKYSAKRAELKKASVDMSLSFEERMEAMDKLAKLPRNASPVRQQNRCRLTGRPHGVYRKFGLSRNMLRQLAMQGDVPGLRKASW.

The protein belongs to the universal ribosomal protein uS14 family. Part of the 30S ribosomal subunit. Contacts proteins S3 and S10.

Binds 16S rRNA, required for the assembly of 30S particles and may also be responsible for determining the conformation of the 16S rRNA at the A site. The sequence is that of Small ribosomal subunit protein uS14 from Hydrogenovibrio crunogenus (strain DSM 25203 / XCL-2) (Thiomicrospira crunogena).